The primary structure comprises 298 residues: Enoyl-CoA hydratase ACTT6 (298 aa).

It belongs to the enoyl-CoA hydratase/isomerase family.

It functions in the pathway mycotoxin biosynthesis. Enoyl-CoA hydratase; part of the gene clusters that mediate the biosynthesis of the host-selective toxins (HSTs) ACT-toxins responsible for brown spot of tangerine disease by the tangerine pathotype which affects tangerines and mandarins. ACT-toxins consist of three moieties, 9,10-epoxy-8-hydroxy-9-methyl-decatrienoic acid (EDA), valine and a polyketide. ACT-toxin I is toxic to both citrus and pear; toxin II the 5''-deoxy derivative of ACT-toxin I, is highly toxic to pear and slightly toxic to citrus. On cellular level, ACT-toxins affect plasma membrane of susceptible cells and cause a sudden increase in loss of K(+) after a few minutes of toxin treatment. The acyl-CoA ligase ACTT1, the hydrolase ACTT2, the enoyl-CoA hydratases ACTT3 and ACTT6, and the acyl-CoA synthetase ACTT5 are all involved in the biosynthesis of the AK-, AF- and ACT-toxin common 9,10-epoxy-8-hydroxy-9-methyl-decatrienoic acid (EDA) structural moiety. The exact role of each enzyme, and of additional enzymes identified within the AF-toxin clusters have still to be determined. On the other hand, ACTTS1 to ACTTS4 are specific to the tangerine pathotype. The function of ACTTS3 is to elongate the polyketide chain portion of ACT-toxin that is unique to this toxin. The enoyl-reductase ACTTS2 might complement the missing enoyl-reductase (ER) domain in ACTTS3 in the synthesis of the polyketide portion of ACT-toxin. The roles of the nonribosomal peptide synthetases-related proteins ACTTS1 and ACTTS4 have also still not been elucidated. This is Enoyl-CoA hydratase ACTT6 from Alternaria alternata (Alternaria rot fungus).